Reading from the N-terminus, the 101-residue chain is Small ribosomal subunit protein uS14 (101 aa).

Belongs to the universal ribosomal protein uS14 family. As to quaternary structure, part of the 30S ribosomal subunit. Contacts proteins S3 and S10.

In terms of biological role, binds 16S rRNA, required for the assembly of 30S particles and may also be responsible for determining the conformation of the 16S rRNA at the A site. This Chlamydia pneumoniae (Chlamydophila pneumoniae) protein is Small ribosomal subunit protein uS14.